A 232-amino-acid chain; its full sequence is Chromosome partition protein MukE (232 aa).

The interval 203 to 232 is disordered; it reads HTKEPSQGSLLSEEDQEEQAQEEMTEEGEA. Residues 214–232 are compositionally biased toward acidic residues; sequence SEEDQEEQAQEEMTEEGEA.

This sequence belongs to the MukE family. As to quaternary structure, interacts, and probably forms a ternary complex, with MukF and MukB. The complex formation is stimulated by calcium or magnesium.

The protein localises to the cytoplasm. Its subcellular location is the nucleoid. Its function is as follows. Involved in chromosome condensation, segregation and cell cycle progression. May participate in facilitating chromosome segregation by condensation DNA from both sides of a centrally located replisome during cell division. Probably acts via its interaction with MukB and MukF. This chain is Chromosome partition protein MukE, found in Vibrio parahaemolyticus serotype O3:K6 (strain RIMD 2210633).